A 397-amino-acid polypeptide reads, in one-letter code: Pyridinium-3,5-bisthiocarboxylic acid mononucleotide nickel insertion protein (397 aa).

The protein belongs to the LarC family.

The enzyme catalyses Ni(II)-pyridinium-3,5-bisthiocarboxylate mononucleotide = pyridinium-3,5-bisthiocarboxylate mononucleotide + Ni(2+). In terms of biological role, involved in the biosynthesis of a nickel-pincer cofactor ((SCS)Ni(II) pincer complex). Binds Ni(2+), and functions in nickel delivery to pyridinium-3,5-bisthiocarboxylic acid mononucleotide (P2TMN), to form the mature cofactor. Is thus probably required for the activation of nickel-pincer cofactor-dependent enzymes. This Thermotoga petrophila (strain ATCC BAA-488 / DSM 13995 / JCM 10881 / RKU-1) protein is Pyridinium-3,5-bisthiocarboxylic acid mononucleotide nickel insertion protein.